The sequence spans 40 residues: SAALAGTIIAGASLGFQILDKVLGELGKVSRKIAVGVDNE.

The plays an important role in the hemolytic activity stretch occupies residues 3-12 (ALAGTIIAGA). The tract at residues 11-30 (GASLGFQILDKVLGELGKVS) is N-terminal region.

This sequence belongs to the actinoporin family. Sea anemone subfamily. Octamer or nonamer in membranes. Monomer in the soluble state.

It localises to the secreted. The protein localises to the nematocyst. It is found in the target cell membrane. In terms of biological role, pore-forming protein that forms cations-selective hydrophilic pores of around 1 nm and causes cardiac stimulation and cytolysis. Pore formation is a multi-step process that involves specific recognition of membrane sphingomyelin (but neither cholesterol nor phosphatidylcholine) using aromatic rich region and adjacent phosphocholine (POC) binding site, firm binding to the membrane (mainly driven by hydrophobic interactions) accompanied by the transfer of the N-terminal region to the lipid-water interface and finally pore formation after oligomerization of monomers. This toxin shows hemolytic activities. This Stichodactyla mertensii (Merten's carpet sea anemone) protein is Cytolysin SmT-1.